Consider the following 86-residue polypeptide: Protein U17 (86 aa).

This is Protein U17 (U17/U16) from Homo sapiens (Human).